Consider the following 295-residue polypeptide: UDP-N-acetylenolpyruvoylglucosamine reductase (295 aa).

The 165-residue stretch at 24 to 188 folds into the FAD-binding PCMH-type domain; it reads KVGGNAEIFF…LKVVFKINKG (165 aa). Residue Arg-168 is part of the active site. The Proton donor role is filled by Ser-217. Glu-287 is a catalytic residue.

It belongs to the MurB family. Requires FAD as cofactor.

The protein resides in the cytoplasm. The enzyme catalyses UDP-N-acetyl-alpha-D-muramate + NADP(+) = UDP-N-acetyl-3-O-(1-carboxyvinyl)-alpha-D-glucosamine + NADPH + H(+). The protein operates within cell wall biogenesis; peptidoglycan biosynthesis. In terms of biological role, cell wall formation. The protein is UDP-N-acetylenolpyruvoylglucosamine reductase of Rickettsia peacockii (strain Rustic).